Here is a 135-residue protein sequence, read N- to C-terminus: Putative pre-16S rRNA nuclease (135 aa).

Belongs to the YqgF nuclease family.

The protein resides in the cytoplasm. In terms of biological role, could be a nuclease involved in processing of the 5'-end of pre-16S rRNA. This chain is Putative pre-16S rRNA nuclease, found in Buchnera aphidicola subsp. Acyrthosiphon pisum (strain 5A).